The following is a 592-amino-acid chain: Aspartate--tRNA(Asp/Asn) ligase (592 aa).

Glutamate 175 contacts L-aspartate. The interval 199 to 202 (QLFK) is aspartate. L-aspartate is bound at residue arginine 221. ATP contacts are provided by residues 221–223 (RDE) and glutamine 230. Histidine 447 is an L-aspartate binding site. Glutamate 481 is an ATP binding site. Residue arginine 488 coordinates L-aspartate. 533–536 (GIDR) lines the ATP pocket.

Belongs to the class-II aminoacyl-tRNA synthetase family. Type 1 subfamily. In terms of assembly, homodimer.

Its subcellular location is the cytoplasm. It carries out the reaction tRNA(Asx) + L-aspartate + ATP = L-aspartyl-tRNA(Asx) + AMP + diphosphate. In terms of biological role, aspartyl-tRNA synthetase with relaxed tRNA specificity since it is able to aspartylate not only its cognate tRNA(Asp) but also tRNA(Asn). Reaction proceeds in two steps: L-aspartate is first activated by ATP to form Asp-AMP and then transferred to the acceptor end of tRNA(Asp/Asn). In Dictyoglomus turgidum (strain DSM 6724 / Z-1310), this protein is Aspartate--tRNA(Asp/Asn) ligase.